The chain runs to 307 residues: 4-hydroxythreonine-4-phosphate dehydrogenase (307 aa).

Residues H126 and T127 each coordinate substrate. A divalent metal cation-binding residues include H156, H195, and H251. 3 residues coordinate substrate: K259, N268, and R277.

This sequence belongs to the PdxA family. Homodimer. It depends on Zn(2+) as a cofactor. Mg(2+) serves as cofactor. Requires Co(2+) as cofactor.

The protein resides in the cytoplasm. It carries out the reaction 4-(phosphooxy)-L-threonine + NAD(+) = 3-amino-2-oxopropyl phosphate + CO2 + NADH. It functions in the pathway cofactor biosynthesis; pyridoxine 5'-phosphate biosynthesis; pyridoxine 5'-phosphate from D-erythrose 4-phosphate: step 4/5. In terms of biological role, catalyzes the NAD(P)-dependent oxidation of 4-(phosphooxy)-L-threonine (HTP) into 2-amino-3-oxo-4-(phosphooxy)butyric acid which spontaneously decarboxylates to form 3-amino-2-oxopropyl phosphate (AHAP). The chain is 4-hydroxythreonine-4-phosphate dehydrogenase from Helicobacter pylori (strain P12).